A 382-amino-acid chain; its full sequence is Lipid-A-disaccharide synthase (382 aa).

This sequence belongs to the LpxB family.

It carries out the reaction 2-N,3-O-bis[(3R)-3-hydroxytetradecanoyl]-alpha-D-glucosaminyl 1-phosphate + UDP-2-N,3-O-bis[(3R)-3-hydroxytetradecanoyl]-alpha-D-glucosamine = lipid A disaccharide (E. coli) + UDP + H(+). It catalyses the reaction a lipid X + a UDP-2-N,3-O-bis[(3R)-3-hydroxyacyl]-alpha-D-glucosamine = a lipid A disaccharide + UDP + H(+). The protein operates within glycolipid biosynthesis; lipid IV(A) biosynthesis; lipid IV(A) from (3R)-3-hydroxytetradecanoyl-[acyl-carrier-protein] and UDP-N-acetyl-alpha-D-glucosamine: step 5/6. In terms of biological role, condensation of UDP-2,3-diacylglucosamine and 2,3-diacylglucosamine-1-phosphate to form lipid A disaccharide, a precursor of lipid A, a phosphorylated glycolipid that anchors the lipopolysaccharide to the outer membrane of the cell. This is Lipid-A-disaccharide synthase from Salmonella heidelberg (strain SL476).